The chain runs to 368 residues: MWSATMERITVNLAERSYPITIGAGLFEDSAHLSSLTAGQKVVVITNVTVAPLYADKILSLLQSLGCQASLLELPDGEQYKSLDTFNQVMSFLLEGSFARDVVVIALGGGVIGDLVGFSAACYQRGVDFIQIPTTLLSQVDSSVGGKTAVNHPLGKNMIGAFYQPKSVIIDTNCLKTLPEREFAAGIAEVIKYGIIYDAEFFTWLDEHLDALYSLDEQALTYAIARCCEIKAEVVAQDEKESGIRALLNLGHTFGHAIEAELGYGNWLHGEAVAAGTVMAARTAQLQGMIDQQQFDKIFSILSRAKLPVHTPESMTFDDFMTHMMRDKKVLSGKLRLVLPSSIGTAEVVADVPQEVIRQAIEDCRTIN.

NAD(+) is bound by residues 76–81 (DGEQYK), 110–114 (GVIGD), 134–135 (TT), K147, K156, and 174–177 (CLKT). E189, H252, and H269 together coordinate Zn(2+).

This sequence belongs to the sugar phosphate cyclases superfamily. Dehydroquinate synthase family. Requires NAD(+) as cofactor. The cofactor is Co(2+). Zn(2+) is required as a cofactor.

The protein resides in the cytoplasm. The catalysed reaction is 7-phospho-2-dehydro-3-deoxy-D-arabino-heptonate = 3-dehydroquinate + phosphate. It functions in the pathway metabolic intermediate biosynthesis; chorismate biosynthesis; chorismate from D-erythrose 4-phosphate and phosphoenolpyruvate: step 2/7. Its function is as follows. Catalyzes the conversion of 3-deoxy-D-arabino-heptulosonate 7-phosphate (DAHP) to dehydroquinate (DHQ). In Vibrio vulnificus (strain YJ016), this protein is 3-dehydroquinate synthase.